The sequence spans 247 residues: MAAAIASGLIRQKRQAREQHWDRPSASRRRSSPSKNRGLCNGNLVDIFSKVRIFGLKKRRLRRQDPQLKGIVTRLYCRQGYYLQMHPDGALDGTKDDSTNSTLFNLIPVGLRVVAIQGVKTGLYIAMNGEGYLYPSELFTPECKFKESVFENYYVIYSSMLYRQQESGRAWFLGLNKEGQAMKGNRVKKTKPAAHFLPKPLEVAMYREPSLHDVGETVPKPGVTPSKSTSASAIMNGGKPVNKSKTT.

Disordered regions lie at residues 1 to 38 and 214 to 247; these read MAAA…KNRG and VGET…SKTT. Residues 15–25 are compositionally biased toward basic and acidic residues; it reads QAREQHWDRPS.

The protein belongs to the heparin-binding growth factors family. As to quaternary structure, interacts with SCN8A. In terms of tissue distribution, nervous system.

Its subcellular location is the nucleus. Its function is as follows. Probably involved in nervous system development and function. In Homo sapiens (Human), this protein is Fibroblast growth factor 14 (FGF14).